The primary structure comprises 547 residues: Sesquiterpene synthase TPS3 (547 aa).

5 residues coordinate (2E,6E)-farnesyl diphosphate: R265, D302, D306, R443, and D446. D302 and D306 together coordinate Mg(2+). Residues 302-306 (DDIYD) carry the DDXXD motif motif. D446, T450, and E454 together coordinate Mg(2+).

This sequence belongs to the terpene synthase family. Tpsb subfamily. Monomer. Mg(2+) is required as a cofactor.

The protein localises to the cytoplasm. The catalysed reaction is (2E,6E)-farnesyl diphosphate = (1S,5S,6R)-alpha-bergamotene + diphosphate. It participates in secondary metabolite biosynthesis; terpenoid biosynthesis. Functionally, sesquiterpene synthase involved in the biosynthesis of volatile organic compounds. Mediates the conversion of (2E,6E)-farnesyl diphosphate (FPP) into alpha-bergamotene. Does not use (2E)-geranyl diphosphate (GPP) as substrate. The polypeptide is Sesquiterpene synthase TPS3 (Cananga odorata (Ylang-ylang tree)).